We begin with the raw amino-acid sequence, 262 residues long: PsbP domain-containing protein 6, chloroplastic (262 aa).

Cysteines 128 and 132 form a disulfide.

The protein belongs to the PsbP family.

The protein localises to the plastid. The protein resides in the chloroplast thylakoid lumen. Its function is as follows. May be involved in the redox regulation of photosystem II. This chain is PsbP domain-containing protein 6, chloroplastic (PPD6), found in Arabidopsis thaliana (Mouse-ear cress).